We begin with the raw amino-acid sequence, 86 residues long: Small ribosomal subunit protein bS20 (86 aa).

Belongs to the bacterial ribosomal protein bS20 family.

In terms of biological role, binds directly to 16S ribosomal RNA. This chain is Small ribosomal subunit protein bS20, found in Mycolicibacterium gilvum (strain PYR-GCK) (Mycobacterium gilvum (strain PYR-GCK)).